The chain runs to 305 residues: uncharacterized protein (305 aa).

3 helical membrane passes run 52-72 (TINL…SKII), 89-109 (IAGF…FIAA), and 120-140 (VIAI…GSLS).

It belongs to the MscS (TC 1.A.23) family.

It localises to the cell membrane. This is an uncharacterized protein from Buchnera aphidicola subsp. Acyrthosiphon pisum (strain APS) (Acyrthosiphon pisum symbiotic bacterium).